The chain runs to 315 residues: Thioredoxin reductase (315 aa).

34–41 is an FAD binding site; sequence EGQKVGGQ. Cysteine 134 and cysteine 137 are disulfide-bonded. 282–291 contacts FAD; sequence DIRVKSLRQV.

It belongs to the class-II pyridine nucleotide-disulfide oxidoreductase family. As to quaternary structure, homodimer. Requires FAD as cofactor.

Its subcellular location is the cytoplasm. The enzyme catalyses [thioredoxin]-dithiol + NADP(+) = [thioredoxin]-disulfide + NADPH + H(+). The sequence is that of Thioredoxin reductase (trxB) from Peptoclostridium acidaminophilum (Eubacterium acidaminophilum).